Reading from the N-terminus, the 409-residue chain is Protein naked cuticle homolog 2-like (409 aa).

Residue G2 is the site of N-myristoyl glycine attachment. An EF-hand domain is found at 109–144; the sequence is AEDNRQEWVFTLYDFDNSGKVTKEDMSSLMHTIYDV. Ca(2+)-binding residues include D122, D124, S126, K128, and D133. Disordered regions lie at residues 166 to 224, 243 to 315, 346 to 367, and 388 to 409; these read VTPE…YCVD, TSRF…RFPG, NHTHAHTPSGLQHSHSRRIRSR, and RHEHHHHHEHHHHHHYHHYHQT. 2 stretches are compositionally biased toward basic and acidic residues: residues 171–185 and 193–224; these read AARRRDATHTERETS and VRSEEHRSADRRQSTHIRGQTEAHEGNHYCVD. Low complexity predominate over residues 247-268; sequence DSSSPDADQDPPSRSSHSQSRP. Positions 389-409 are enriched in basic residues; that stretch reads HEHHHHHEHHHHHHYHHYHQT.

It belongs to the NKD family.

It is found in the cell membrane. Its subcellular location is the cytoplasm. Cell autonomous antagonist of both the canonical and non-canonical Wnt signaling pathways. The protein is Protein naked cuticle homolog 2-like (nkd2l) of Danio rerio (Zebrafish).